The chain runs to 561 residues: DNA ligase (561 aa).

Glu-247 lines the ATP pocket. The active-site N6-AMP-lysine intermediate is Lys-249. Residues Arg-254, Arg-269, Glu-299, Phe-339, Arg-414, and Lys-420 each contribute to the ATP site.

Belongs to the ATP-dependent DNA ligase family. In terms of assembly, monomer. It depends on Mg(2+) as a cofactor.

It catalyses the reaction ATP + (deoxyribonucleotide)n-3'-hydroxyl + 5'-phospho-(deoxyribonucleotide)m = (deoxyribonucleotide)n+m + AMP + diphosphate.. Its function is as follows. DNA ligase that seals nicks in double-stranded DNA during DNA replication, DNA recombination and DNA repair. This Pyrococcus furiosus (strain ATCC 43587 / DSM 3638 / JCM 8422 / Vc1) protein is DNA ligase.